The sequence spans 298 residues: uncharacterized protein (298 aa).

It belongs to the glycosyltransferase 2 family.

This is an uncharacterized protein from Mycoplasma genitalium (strain ATCC 33530 / DSM 19775 / NCTC 10195 / G37) (Mycoplasmoides genitalium).